The following is a 381-amino-acid chain: MKVVIASDSYKESLKAIEVCEAIERGFGAIFPKAEYVKIPIGDGGEGTVDSLVDATSGRIISFHVTGPLRESVQAFYGMSKDKKTAFIEMAAASGLQHVPAKKRNPLITTTKGTGELILHALDEGAEHIILGLGGSATNDGGAGMLSALGVRFINGKGEVIEPSGGTLHSIVSIDFSQMDSRLKHIKIEAACDVDNPLVGIRGASFVFGRQKGADEEMMKELDENLKHYAHILKQYLFCDVSKIPGAGAAGGMGAAVIAVLKGSLRRGIEIVLDYTNFDKHIEGADLIITGEGRIDEQTAYGKAPVGVAERAKLFHIPVIAIGGSVSPNYSAVHEKGIDAVFSITTSPTTLEEAYKVAEENIEMTAKNIAAVWKIASEKHF.

The protein belongs to the glycerate kinase type-1 family.

It carries out the reaction (R)-glycerate + ATP = (2R)-3-phosphoglycerate + ADP + H(+). The protein is Glycerate kinase (glxK) of Bacillus cereus (strain ATCC 10987 / NRS 248).